Here is a 419-residue protein sequence, read N- to C-terminus: NF-kappa-B essential modulator (419 aa).

The segment at Met-1–Val-197 is required for interaction with and ubiquitination by MARCHF2. Phosphoserine; by IKKB occurs at positions 31 and 43. Positions Glu-44–Lys-111 are interaction with CHUK/IKBKB. The stretch at Glu-49 to Met-356 forms a coiled coil. The residue at position 68 (Ser-68) is a Phosphoserine. Phosphoserine; by ATM is present on Ser-85. Glycyl lysine isopeptide (Lys-Gly) (interchain with G-Cter in ubiquitin) cross-links involve residues Lys-111, Lys-139, Lys-143, Lys-226, Lys-246, and Lys-264. The segment at Leu-150–Gly-257 is interaction with TANK. Residues Asp-242–Ser-350 form a ubiquitin-binding (UBAN) region. Residues Lys-246–Gln-365 form a self-association region. Residues Gly-251–Glu-419 form a required for interaction with TNFAIP3 region. Lys-277 participates in a covalent cross-link: Glycyl lysine isopeptide (Lys-Gly) (interchain with G-Cter in SUMO); alternate. Residue Lys-277 forms a Glycyl lysine isopeptide (Lys-Gly) (interchain with G-Cter in ubiquitin); alternate linkage. Glycyl lysine isopeptide (Lys-Gly) (interchain with G-Cter in ubiquitin) cross-links involve residues Lys-283, Lys-285, Lys-292, and Lys-302. A Glycyl lysine isopeptide (Lys-Gly) (interchain with G-Cter in SUMO); alternate cross-link involves residue Lys-309. Residue Lys-309 forms a Glycyl lysine isopeptide (Lys-Gly) (interchain with G-Cter in ubiquitin); alternate linkage. Glycyl lysine isopeptide (Lys-Gly) (interchain with G-Cter in ubiquitin) cross-links involve residues Lys-321 and Lys-325. The tract at residues Leu-322–Leu-343 is leucine-zipper. Lys-326 is covalently cross-linked (Glycyl lysine isopeptide (Lys-Gly) (interchain with G-Cter in ubiquitin and interchain with MARCHF2)). The tract at residues Lys-358 to Phe-395 is disordered. Over residues Ala-373 to Arg-386 the composition is skewed to low complexity. Ser-376 is subject to Phosphoserine; by IKKB. The interaction with CYLD stretch occupies residues Pro-382–Glu-419. Residue Ser-387 is modified to Phosphoserine. A CCHC NOA-type zinc finger spans residues Pro-389–Glu-419. Cys-397 serves as a coordination point for Zn(2+). A Glycyl lysine isopeptide (Lys-Gly) (interchain with G-Cter in ubiquitin) cross-link involves residue Lys-399. 3 residues coordinate Zn(2+): Cys-400, His-413, and Cys-417.

Homodimer; disulfide-linked. Component of the I-kappa-B-kinase (IKK) core complex consisting of CHUK, IKBKB and IKBKG; probably four alpha/CHUK-beta/IKBKB dimers are associated with four gamma/IKBKG subunits. The IKK core complex seems to associate with regulatory or adapter proteins to form a IKK-signalosome holo-complex. The IKK complex associates with TERF2IP/RAP1, leading to promote IKK-mediated phosphorylation of RELA/p65. Part of a complex composed of NCOA2, NCOA3, CHUK/IKKA, IKBKB, IKBKG and CREBBP. Interacts with COPS3, CYLD, NALP2, TRPC4AP and PIDD1. Interacts with ATM; the complex is exported from the nucleus. Interacts with TRAF6. Interacts with IKBKE. Interacts with TANK; the interaction is enhanced by IKBKE and TBK1. Part of a ternary complex consisting of TANK, IKBKB and IKBKG. Interacts with ZFAND5. Interacts with RIPK2. Interacts with TNIP1 and TNFAIP3; TNIP1 facilitates the TNFAIP3-mediated de-ubiquitination of IKBKG. Interacts with TNFAIP3; the interaction is induced by TNF stimulation and by polyubiquitin. Binds (via UBAN region) polyubiquitin; binds both 'Lys-63'-linked and linear polyubiquitin, with higher affinity for linear ubiquitin. Interacts with NLRP10. Interacts with TANK; this interaction increases in response to DNA damage. Interacts with USP10; this interaction increases in response to DNA damage. Interacts with ZC3H12A; this interaction increases in response to DNA damage. Interacts with IFIT5; the interaction synergizes the recruitment of IKK to MAP3K7 and enhances IKK phosphorylation. Interacts with TRIM29; this interaction induces IKBKG/NEMO ubiquitination and proteolytic degradation. Interacts with TRIM13; this interaction leads to IKBKG/NEMO ubiquitination. Interacts with ARFIP2. Interacts with RIPK1. Interacts with (ubiquitinated) BCL10; interaction with polyubiquitinated BCL10 via both 'Lys-63'-linked and linear ubiquitin is required for TCR-induced NF-kappa-B activation. Interacts with MARCHF2; during the late stages of macrophage viral and bacterial infection; the interaction leads to ubiquitination and degradation of IKBKG/NEMO. As to quaternary structure, (Microbial infection) Interacts with Molluscum contagiosum virus protein MC005; this interaction inhibits NF-kappa-B activation. In terms of assembly, (Microbial infection) Interacts with HTLV-1 Tax oncoprotein; the interaction activates IKBKG. (Microbial infection) Interacts with Shigella flexneri ipah9.8; the interaction promotes TNIP1-dependent 'Lys-27'-linked polyubiquitination of IKBKG which perturbs NF-kappa-B activation during bacterial infection. As to quaternary structure, (Microbial infection) Interacts with SARS coronavirus-2/SARS-CoV-2 virus protein ORF9B (via N-terminus); the interaction inhibits polyubiquitination through 'Lys-63' and NF-kappa-B activation. In terms of processing, phosphorylation at Ser-68 attenuates aminoterminal homodimerization. Polyubiquitinated on Lys-285 via 'Lys-63'-linked ubiquitin; the ubiquitination is mediated downstream of NOD2 and RIPK2 and probably plays a role in signaling by facilitating interactions with ubiquitin domain-containing proteins and activates the NF-kappa-B pathway. Polyubiquitinated on Lys-285 and Lys-399 through 'Lys-63'-linked ubiquitin; the ubiquitination is mediated by BCL10, MALT1 and TRAF6 and probably plays a role in signaling by facilitating interactions with ubiquitin domain-containing proteins and activates the NF-kappa-B pathway. Monoubiquitinated on Lys-277 and Lys-309; promotes nuclear export. Polyubiquitinated through 'Lys-27' by TRIM23; involved in antiviral innate and inflammatory responses. Linear polyubiquitinated on Lys-111, Lys-143, Lys-226, Lys-246, Lys-264, Lys-277, Lys-285, Lys-292, Lys-302, Lys-309 and Lys-326; the head-to-tail polyubiquitination is mediated by the LUBAC complex and plays a key role in NF-kappa-B activation. Deubiquitinated by USP10 in a TANK-dependent and -independent manner, leading to the negative regulation of NF-kappa-B signaling upon DNA damage. Ubiquitinated at Lys-326 by MARCHF2 following bacterial and viral infection which leads to its degradation. Polyubiquitinated via 'Lys-29'-linked ubiquitin; leading to lysosomal degradation. Post-translationally, sumoylated on Lys-277 and Lys-309 with SUMO1; the modification results in phosphorylation of Ser-85 by ATM leading to a replacement of the sumoylation by mono-ubiquitination on these residues. In terms of processing, neddylated by TRIM40, resulting in stabilization of NFKBIA and down-regulation of NF-kappa-B activity. (Microbial infection) Cleaved by hepatitis A virus (HAV) protease 3C allowing the virus to disrupt the host innate immune signaling. Post-translationally, (Microbial infection) Deubiquitinated by Epstein-Barr virus BPLF1 on both 'Lys-48' and 'Lys-63'-linked ubiquitin chains; leading to NF-kappa-B signaling inhibition. In terms of processing, (Microbial infection) Polyubiquitinated on Lys-309 and Lys-321 via 'Lys-27'-linked ubiquitin by Shigella flexneri E3 ubiquitin-protein ligase ipah9.8, leading to its degradation by the proteasome. (Microbial infection) Polyubiquitination through 'Lys-63' is interrupted by interaction with SARS coronavirus-2/SARS-CoV-2 virus protein ORF9B which inhibits the NF-kappa-B pathway. In terms of tissue distribution, heart, brain, placenta, lung, liver, skeletal muscle, kidney and pancreas.

The protein resides in the cytoplasm. Its subcellular location is the nucleus. Regulatory subunit of the IKK core complex which phosphorylates inhibitors of NF-kappa-B thus leading to the dissociation of the inhibitor/NF-kappa-B complex and ultimately the degradation of the inhibitor. Its binding to scaffolding polyubiquitin plays a key role in IKK activation by multiple signaling receptor pathways. Can recognize and bind both 'Lys-63'-linked and linear polyubiquitin upon cell stimulation, with a much higher affinity for linear polyubiquitin. Could be implicated in NF-kappa-B-mediated protection from cytokine toxicity. Essential for viral activation of IRF3. Involved in TLR3- and IFIH1-mediated antiviral innate response; this function requires 'Lys-27'-linked polyubiquitination. Its function is as follows. (Microbial infection) Also considered to be a mediator for HTLV-1 Tax oncoprotein activation of NF-kappa-B. The sequence is that of NF-kappa-B essential modulator from Homo sapiens (Human).